A 70-amino-acid polypeptide reads, in one-letter code: Brevinin-1MT1 (70 aa).

The first 22 residues, 1–22 (MFTLKKSLLLLFFLGTINLSLC), serve as a signal peptide directing secretion. Positions 23–44 (EQERDADEEERRDDDEMDVEVE) are excised as a propeptide. The cysteines at positions 64 and 70 are disulfide-linked.

This sequence belongs to the frog skin active peptide (FSAP) family. Brevinin subfamily. Expressed by the skin glands.

Its subcellular location is the secreted. Functionally, antimicrobial peptide with activity against a variety of Gram-negative and Gram-positive bacteria and against fungi. Shows strong hemolytic activity against human erythrocytes. The protein is Brevinin-1MT1 of Amolops mantzorum (Sichuan torrent frog).